The chain runs to 384 residues: 23S rRNA (uracil(747)-C(5))-methyltransferase RlmC (384 aa).

Positions 7, 15, 18, and 94 each coordinate [4Fe-4S] cluster. S-adenosyl-L-methionine-binding residues include Gln219, Phe248, Glu269, and Asn316. Residue Cys343 is the Nucleophile of the active site.

The protein belongs to the class I-like SAM-binding methyltransferase superfamily. RNA M5U methyltransferase family. RlmC subfamily.

The enzyme catalyses uridine(747) in 23S rRNA + S-adenosyl-L-methionine = 5-methyluridine(747) in 23S rRNA + S-adenosyl-L-homocysteine + H(+). In terms of biological role, catalyzes the formation of 5-methyl-uridine at position 747 (m5U747) in 23S rRNA. This is 23S rRNA (uracil(747)-C(5))-methyltransferase RlmC from Shewanella sp. (strain MR-4).